The sequence spans 104 residues: L-rhamnose mutarotase (104 aa).

Tyr18 contributes to the substrate binding site. Residue His22 is the Proton donor of the active site. Residues Tyr41 and 76–77 (WW) contribute to the substrate site.

The protein belongs to the rhamnose mutarotase family. Homodimer.

The protein localises to the cytoplasm. It catalyses the reaction alpha-L-rhamnose = beta-L-rhamnose. The protein operates within carbohydrate metabolism; L-rhamnose metabolism. Functionally, involved in the anomeric conversion of L-rhamnose. The protein is L-rhamnose mutarotase of Acidiphilium cryptum (strain JF-5).